The following is a 97-amino-acid chain: UPF0235 protein APP7_1431 (97 aa).

This sequence belongs to the UPF0235 family.

In Actinobacillus pleuropneumoniae serotype 7 (strain AP76), this protein is UPF0235 protein APP7_1431.